Reading from the N-terminus, the 482-residue chain is Methylenetetrahydrofolate--tRNA-(uracil-5-)-methyltransferase TrmFO (482 aa).

FAD is bound at residue 20 to 25 (GGGLAG).

Belongs to the MnmG family. TrmFO subfamily. It depends on FAD as a cofactor.

Its subcellular location is the cytoplasm. The catalysed reaction is uridine(54) in tRNA + (6R)-5,10-methylene-5,6,7,8-tetrahydrofolate + NADH + H(+) = 5-methyluridine(54) in tRNA + (6S)-5,6,7,8-tetrahydrofolate + NAD(+). It carries out the reaction uridine(54) in tRNA + (6R)-5,10-methylene-5,6,7,8-tetrahydrofolate + NADPH + H(+) = 5-methyluridine(54) in tRNA + (6S)-5,6,7,8-tetrahydrofolate + NADP(+). Its function is as follows. Catalyzes the folate-dependent formation of 5-methyl-uridine at position 54 (M-5-U54) in all tRNAs. In Rhodopseudomonas palustris (strain HaA2), this protein is Methylenetetrahydrofolate--tRNA-(uracil-5-)-methyltransferase TrmFO.